The chain runs to 85 residues: Large ribosomal subunit protein bL27 (85 aa).

Residues 1–20 (MATKKAGGSTRNGRDSEAKR) form a disordered region.

It belongs to the bacterial ribosomal protein bL27 family.

The polypeptide is Large ribosomal subunit protein bL27 (Actinobacillus succinogenes (strain ATCC 55618 / DSM 22257 / CCUG 43843 / 130Z)).